A 411-amino-acid chain; its full sequence is Lysosome-associated membrane glycoprotein 2 (411 aa).

The N-terminal stretch at 1 to 26 (MRLLSPVTGSKLVLLFLFLGAVRSDA) is a signal peptide. A first lumenal domain region spans residues 27–188 (LKLNLTDSKG…SKHEQVCKED (162 aa)). Residues 27–376 (LKLNLTDSKG…QDCSADEDNF (350 aa)) lie on the Lumenal side of the membrane. Cysteines 38 and 75 form a disulfide. 15 N-linked (GlcNAc...) asparagine glycosylation sites follow: N46, N57, N71, N97, N109, N117, N175, N223, N230, N243, N261, N276, N308, N318, and N357. Residues C149 and C185 are joined by a disulfide bond. A hinge region spans residues 189-229 (KTATTVAPIIHTTVPSPTTTLTPTSIPVPTPTVGNYTISNG). The interval 230-376 (NATCLLATMG…QDCSADEDNF (147 aa)) is second lumenal domain. C233 and C266 are joined by a disulfide. C332 and C369 are oxidised to a cystine. A helical transmembrane segment spans residues 377–400 (LVPIAVGAALGGVLILVLLAYFIG). Topologically, residues 401 to 411 (LKRHHTGYEQF) are cytoplasmic. The important for binding and subsequent lysosomal degradation of target proteins stretch occupies residues 402 to 405 (KRHH).

This sequence belongs to the LAMP family. Monomer. Forms large homooligomers. Interacts (via its cytoplasmic region) with HSPA8; HSPA8 mediates recruitment of proteins with a KFERQ motif to the surface of the lysosome for chaperone-mediated autophagy. Interacts with HSP90 in the lysosome lumen; this enhances LAMP2 stability. Interacts with MLLT11. Interacts with ABCB9. Interacts with FURIN. Interacts with CT55; this interaction may be important for LAMP2 protein stability. Interacts with TMEM175; inhibiting the proton channel activity of TMEM175. Forms a ternary complex with RAB7A and RUFY4 (via RUN domain); the interaction with RAB7A is mediated by RUFY4 (via RUN and coiled coil domains). In terms of processing, extensively N-glycosylated. Contains a minor proportion of O-linked glycans. Contains sialylated glycans. In terms of tissue distribution, detected in liver, kidney, spleen and macrophages (at protein level).

The protein localises to the lysosome membrane. It localises to the endosome membrane. The protein resides in the cell membrane. It is found in the cytoplasmic vesicle. Its subcellular location is the autophagosome membrane. In terms of biological role, lysosomal membrane glycoprotein which plays an important role in lysosome biogenesis, lysosomal pH regulation and autophagy. Acts as an important regulator of lysosomal lumen pH regulation by acting as a direct inhibitor of the proton channel TMEM175, facilitating lysosomal acidification for optimal hydrolase activity. Plays an important role in chaperone-mediated autophagy, a process that mediates lysosomal degradation of proteins in response to various stresses and as part of the normal turnover of proteins with a long biological half-live. Functions by binding target proteins, such as GAPDH, NLRP3 and MLLT11, and targeting them for lysosomal degradation. In the chaperone-mediated autophagy, acts downstream of chaperones, such as HSPA8/HSC70, which recognize and bind substrate proteins and mediate their recruitment to lysosomes, where target proteins bind LAMP2. Plays a role in lysosomal protein degradation in response to starvation. Required for the fusion of autophagosomes with lysosomes during autophagy. Cells that lack LAMP2 express normal levels of VAMP8, but fail to accumulate STX17 on autophagosomes, which is the most likely explanation for the lack of fusion between autophagosomes and lysosomes. Required for normal degradation of the contents of autophagosomes. Required for efficient MHC class II-mediated presentation of exogenous antigens via its function in lysosomal protein degradation; antigenic peptides generated by proteases in the endosomal/lysosomal compartment are captured by nascent MHC II subunits. Is not required for efficient MHC class II-mediated presentation of endogenous antigens. The protein is Lysosome-associated membrane glycoprotein 2 (Lamp2) of Rattus norvegicus (Rat).